The following is a 69-amino-acid chain: DNA gyrase inhibitor YacG (69 aa).

Residues 1 to 15 (MSDEPEHTAKVEPLR) are compositionally biased toward basic and acidic residues. Positions 1–22 (MSDEPEHTAKVEPLRKPLPCPE) are disordered. 4 residues coordinate Zn(2+): Cys-20, Cys-23, Cys-35, and Cys-39.

The protein belongs to the DNA gyrase inhibitor YacG family. Interacts with GyrB. The cofactor is Zn(2+).

Functionally, inhibits all the catalytic activities of DNA gyrase by preventing its interaction with DNA. Acts by binding directly to the C-terminal domain of GyrB, which probably disrupts DNA binding by the gyrase. This is DNA gyrase inhibitor YacG from Allorhizobium ampelinum (strain ATCC BAA-846 / DSM 112012 / S4) (Agrobacterium vitis (strain S4)).